A 593-amino-acid polypeptide reads, in one-letter code: MEDYKQRIKNKLNVVPMEPGCYLMKDRNDQVIYVGKAKKLRNRLRSYFTGAHDAKTTRLVGEIRRFEFIVTSSETESLLLELNLIKQYQPRYNILLKDDKSYPFIKITKEKYPRLLVTRTVKQGTGKYFGPYPNAYSAQETKKLLDRIYPYRKCDKMPDKLCLYYHIGQCLGPCVYDVDLSKYAQMTKEITDFLNGEDKTILKSLEERMLTASESLDFERAKEYRDLIQHIQNLTNKQKIMSSDKTIRDVFGYSVDKGWMCIQVFFIRQGNMIKRDTTMIPLQQTEEEEFYTFIGQFYSLNQHILPKEVHVPRNLDKEMIQSVVDTKIVQPARGPKKDMVDLAAHNAKVSLNNKFELISRDESRTIKAIEELGTQMGIQTPIRIEAFDNSNIQGVDPVSAMVTFIDGKPDKKNYRKYKIKTVKGPDDYKSMREVVRRRYSRVLNEGLPLPDLIIVDGGKGHMNGVIDVLQNELGLDIPVAGLQKNDKHQTSELLYGASAEIVPLKKNSQAFYLLHRIQDEVHRFAITFHRQTRQKTGLKSILDDIDGIGNKRKTLLLRSFGSIKKMKEATLEDFKNIGIPENVAKNLHEQLHK.

The region spanning 17–94 (MEPGCYLMKD…IKQYQPRYNI (78 aa)) is the GIY-YIG domain. One can recognise a UVR domain in the interval 199 to 234 (KTILKSLEERMLTASESLDFERAKEYRDLIQHIQNL).

It belongs to the UvrC family. As to quaternary structure, interacts with UvrB in an incision complex.

It localises to the cytoplasm. Functionally, the UvrABC repair system catalyzes the recognition and processing of DNA lesions. UvrC both incises the 5' and 3' sides of the lesion. The N-terminal half is responsible for the 3' incision and the C-terminal half is responsible for the 5' incision. The chain is UvrABC system protein C from Staphylococcus aureus (strain MSSA476).